The sequence spans 514 residues: 2,3-bisphosphoglycerate-independent phosphoglycerate mutase (514 aa).

Residues Asp14 and Ser64 each contribute to the Mn(2+) site. Ser64 functions as the Phosphoserine intermediate in the catalytic mechanism. Residues His125, 155-156, Arg187, Arg193, 263-266, and Lys336 contribute to the substrate site; these read RD and RADR. Mn(2+)-binding residues include Asp403, His407, Asp444, His445, and His463.

This sequence belongs to the BPG-independent phosphoglycerate mutase family. Monomer. The cofactor is Mn(2+).

It carries out the reaction (2R)-2-phosphoglycerate = (2R)-3-phosphoglycerate. The protein operates within carbohydrate degradation; glycolysis; pyruvate from D-glyceraldehyde 3-phosphate: step 3/5. Catalyzes the interconversion of 2-phosphoglycerate and 3-phosphoglycerate. In Shewanella baltica (strain OS195), this protein is 2,3-bisphosphoglycerate-independent phosphoglycerate mutase.